The primary structure comprises 109 residues: Histidine-rich carboxyl terminus protein 1 (109 aa).

Residues Trp13–Phe33 form a helical membrane-spanning segment. Residues Thr77–Arg109 form a disordered region. A compositionally biased stretch (basic residues) spans Val81 to Arg109.

Its subcellular location is the membrane. The chain is Histidine-rich carboxyl terminus protein 1 (Hrct1) from Mus musculus (Mouse).